Here is a 96-residue protein sequence, read N- to C-terminus: MAKSGYNASFLLLISMFLILLTFSNVVEGYNKLRPTDCKPRCTYRCSATSHKKPCMFFCQKCCATCLCVPKGVYGNKQSCPCYNNWKTQEGKPKCP.

The first 29 residues, 1–29, serve as a signal peptide directing secretion; it reads MAKSGYNASFLLLISMFLILLTFSNVVEG.

This sequence belongs to the GASA family. In terms of processing, six disulfide bonds may be present. Expressed very early in lateral root development.

The protein resides in the secreted. In Solanum lycopersicum (Tomato), this protein is Protein RSI-1 (RSI-1).